A 424-amino-acid polypeptide reads, in one-letter code: MISNNLIEQLEQRGLIAQVTDKTRLSERLYQGQISLYCGFDPTADSLHLGHLVPLLCLKRFQLVGHKPIILVGGATGLIGDPSFKAGERKLNDIDTVHQWVNKIREQVEPFLDFDCGNHSATIENNHNWFSHINVLTFLRDIGKHFSVNQMMNKEAVKQRLSRTDSGISFTEFSYNLLQSYDFAYLNKNHKVELQIGGSDQWGNITSGIDLTHRLNRRSVYGLTVPLITKADGSKFGKTEGNTIWLDAKKTSPYQFYQFWLNTADADVYRFLKLFTFIDLNAIDALEEQDKKNDKAPQAQYVLANEITEMVHGKEGLSAAQRITASLFTGNPHDMREEDFSQLAQDGIPIVRLETDAELQKALVSAQLAPSRSQARTLIQSSSISVNGKKQLKPEYIFTSEDRLLDRYTLLRRGKKYYCLIIWQ.

Tyr-37 is an L-tyrosine binding site. Residues 42–51 (PTADSLHLGH) carry the 'HIGH' region motif. L-tyrosine is bound by residues Tyr-175 and Gln-179. Positions 235 to 239 (KFGKT) match the 'KMSKS' region motif. Lys-238 lines the ATP pocket. In terms of domain architecture, S4 RNA-binding spans 357-414 (AELQKALVSAQLAPSRSQARTLIQSSSISVNGKKQLKPEYIFTSEDRLLDRYTLLRRG).

This sequence belongs to the class-I aminoacyl-tRNA synthetase family. TyrS type 1 subfamily. As to quaternary structure, homodimer.

The protein resides in the cytoplasm. The catalysed reaction is tRNA(Tyr) + L-tyrosine + ATP = L-tyrosyl-tRNA(Tyr) + AMP + diphosphate + H(+). Catalyzes the attachment of tyrosine to tRNA(Tyr) in a two-step reaction: tyrosine is first activated by ATP to form Tyr-AMP and then transferred to the acceptor end of tRNA(Tyr). The chain is Tyrosine--tRNA ligase from Hamiltonella defensa subsp. Acyrthosiphon pisum (strain 5AT).